Consider the following 689-residue polypeptide: MSAQNLLVEIGTEELPPKALRKLAEAFAANLTAELETLELAHQGVSWYASPRRLGLRVIALDAKQQDKEVEKRGPAIKAAFDADGNPTKAAMGWARGCGIEVKDAQTLETDKGAWLLHLAKVAGQETKTLMVDVINKALAKLPIPKPMRWGANKTQFIRPVHTVTILLGDELVTGEVLGKQVSNQLQGHRFHHPEKITINHADDIFDVLKSAYVIADYEQRKAQIRAQIEAAAKAINAVVAMDEDLLEEVTSLVEWPVTLTATFEEEFLAVPAEALIYTMKDDQKYFPLLDQNGKLLNKFLFVSNIESKDPSVVISGNEKVVRPRLADAQFFFESDKKKTLESRLESLDSVLFQKQLGTLKDKSARISELAGYIAQQLGADKELAQRAGLLSKTDLMTEMVMEFTDIQGVMGMHYARFDGEAEDVALAQNEQYMPRFAGDSLPTNLISCAVAIADKFDTLVGIFGIGQAPKGDKDPFALRRAAIGALRIMVEKELPLDILDLVAKSQTLFGDKLTNLNVSTDVFEFMLGRFRAWYQDEGIEVDVIQAVLARRPTKPVDFDRRVKAVSHFRTLDAAEALAAANKRVSNILAKNDITSEGNVDESLLTDDAEKVLAAQVAKFATELAPLYASGNYQEALSQLAGIRQSVDSFFDNVMVMADDEAVKQNRLALLSQLSGLFLGIADISVLQK.

The protein belongs to the class-II aminoacyl-tRNA synthetase family. Tetramer of two alpha and two beta subunits.

It localises to the cytoplasm. It catalyses the reaction tRNA(Gly) + glycine + ATP = glycyl-tRNA(Gly) + AMP + diphosphate. This is Glycine--tRNA ligase beta subunit from Pseudoalteromonas translucida (strain TAC 125).